Reading from the N-terminus, the 58-residue chain is Large ribosomal subunit protein eL24 (58 aa).

Residues Cys-6, Cys-9, Cys-32, and Cys-36 each contribute to the Zn(2+) site. The C4-type zinc-finger motif lies at 6–36 (CSFCGYDIEPGTGKMYVRRDGRVFYFCSGKC).

It belongs to the eukaryotic ribosomal protein eL24 family. As to quaternary structure, part of the 50S ribosomal subunit. Forms a cluster with proteins L3 and L14. Requires Zn(2+) as cofactor.

Binds to the 23S rRNA. This is Large ribosomal subunit protein eL24 from Archaeoglobus fulgidus (strain ATCC 49558 / DSM 4304 / JCM 9628 / NBRC 100126 / VC-16).